Reading from the N-terminus, the 115-residue chain is Colicin-Ib immunity protein (115 aa).

The next 3 helical transmembrane spans lie at 7-27 (VKYLLKSLIPILIILTVFYLG), 38-58 (FYAFIGCIISAITFPFSMRII), and 87-107 (IFELFCFVISVPVVAIYLIFI).

It localises to the cell membrane. Its function is as follows. This protein is able to protect a cell, which harbors the plasmid IncI1 ColIb-P9 encoding colicin Ib, against colicin Ib. This is Colicin-Ib immunity protein from Escherichia coli.